A 388-amino-acid chain; its full sequence is P2X purinoceptor 4 (388 aa).

Residues 1 to 33 (MAGCCSVLGSFLFEYDTPRIVLIRSRKVGLMNR) are Cytoplasmic-facing. A helical membrane pass occupies residues 34 to 54 (AVQLLILAYVIGWVFVWEKGY). The Extracellular segment spans residues 55-338 (QETDSVVSSV…KFDIIPTMIN (284 aa)). ATP-binding residues include Lys-67 and Lys-69. Positions 67 and 69 each coordinate CTP. N-linked (GlcNAc...) asparagine glycans are attached at residues Asn-75 and Asn-110. Cystine bridges form between Cys-116/Cys-165, Cys-126/Cys-149, and Cys-132/Cys-159. Asn-153 and Asn-184 each carry an N-linked (GlcNAc...) asparagine glycan. ATP-binding residues include Thr-186 and Leu-188. Thr-186 lines the CTP pocket. Asn-199 and Asn-208 each carry an N-linked (GlcNAc...) asparagine glycan. Cystine bridges form between Cys-217/Cys-227 and Cys-261/Cys-270. Residues Asn-293, Arg-295, and Lys-313 each coordinate ATP. Residues Asn-293, Arg-295, and Lys-313 each contribute to the CTP site. A helical membrane pass occupies residues 339–359 (VGSGLALLGVATVLCDVIVLY). Over 360–388 (CMKKKYYYRDKKYKYVEDYEQGLSGEMNQ) the chain is Cytoplasmic.

It belongs to the P2X receptor family. Functional P2RXs are organized as homomeric and heteromeric trimers. Forms heterotrimer with P2RX1. Interacts with P2RX7 (via C-terminus); this interaction is functional only in the presence of ATP. Forms heterotrimer with P2RX4; functional differences between homomeric P2RX4 and P2RX4/6 heterotrimer are minor. Interacts with AP1M2. In terms of tissue distribution, widespread distribution in the brain. Strongly expressed in microglial cells. Also expressed in epithelial cells.

It is found in the cell membrane. It localises to the lysosome membrane. The catalysed reaction is K(+)(in) = K(+)(out). It carries out the reaction Na(+)(in) = Na(+)(out). The enzyme catalyses Ca(2+)(in) = Ca(2+)(out). With respect to regulation, activated by ATP. pH-dependent and inhibited by acidic pH. ATP-gated nonselective transmembrane cation channel permeable to potassium, sodium and calcium. CTP, but not GTP or UTP, functions as a weak affinity agonist for P2RX4. Activated by extracellularly released ATP, it plays multiple role in immunity and central nervous system physiology. Plays a key role in initial steps of T-cell activation and Ca(2+) microdomain formation. Also participates in basal T-cell activity without TCR/CD3 stimulation. Promotes the differentiation and activation of Th17 cells via expression of retinoic acid-related orphan receptor C/RORC. Upon activation, drives microglia motility via the PI3K/Akt pathway. Could also function as an ATP-gated cation channel of lysosomal membranes. The protein is P2X purinoceptor 4 (P2rx4) of Rattus norvegicus (Rat).